The primary structure comprises 387 residues: Eukaryotic translation initiation factor 3 subunit M (387 aa).

The region spanning 181–340 (LSSKVMIELL…RKVHISSTMH (160 aa)) is the PCI domain.

The protein belongs to the eIF-3 subunit M family. As to quaternary structure, component of the eukaryotic translation initiation factor 3 (eIF-3) complex. The eIF-3 complex interacts with pix.

The protein resides in the cytoplasm. The protein localises to the golgi apparatus. Functionally, component of the eukaryotic translation initiation factor 3 (eIF-3) complex, which is involved in protein synthesis of a specialized repertoire of mRNAs and, together with other initiation factors, stimulates binding of mRNA and methionyl-tRNAi to the 40S ribosome. The eIF-3 complex specifically targets and initiates translation of a subset of mRNAs involved in cell proliferation. The protein is Eukaryotic translation initiation factor 3 subunit M of Drosophila persimilis (Fruit fly).